Here is a 2240-residue protein sequence, read N- to C-terminus: Nonribisomal peptide synthetase notE (2240 aa).

Positions 22 to 52 are disordered; sequence TETMRETLSSSSSPLSLSSITSPLSSASEPP. Low complexity predominate over residues 28 to 52; that stretch reads TLSSSSSPLSLSSITSPLSSASEPP. The segment at 85-484 is adenylation 1; that stretch reads QQRCREAPES…GRKEGQVKIR (400 aa). A Carrier 1 domain is found at 616-692; that stretch reads PPTTATEHAL…EQARKATPVS (77 aa). Ser653 is modified (O-(pantetheine 4'-phosphoryl)serine). The segment at 732-1144 is condensation 1; it reads EDIFPCTPLQ…DFASPQDRDL (413 aa). Residues 1167–1564 are adenylation 2; the sequence is QEARQPSREA…GRRDTQLKLR (398 aa). Residues 1700–1776 form the Carrier 2 domain; that stretch reads PVSRGPELRL…ELARCTGEEP (77 aa). Ser1737 carries the O-(pantetheine 4'-phosphoryl)serine modification. The interval 1845–2159 is condensation 2; the sequence is FSFHGEVSVE…ILQHQNIDMD (315 aa). The disordered stretch occupies residues 2008 to 2027; that stretch reads CTMPVKATPPTDSDDSRPSA.

This sequence belongs to the NRP synthetase family.

It catalyses the reaction L-proline + L-tryptophan + 2 ATP = brevianamide F + 2 AMP + 2 diphosphate + 2 H(+). The protein operates within alkaloid biosynthesis. Nonribisomal peptide synthetase; part of the gene cluster that mediates the biosynthesis of notoamide, a fungal indole alkaloid that belongs to a family of natural products containing a characteristic bicyclo[2.2.2]diazaoctane core. The first step of notoamide biosynthesis involves coupling of L-proline and L-tryptophan by the bimodular NRPS notE, to produce cyclo-L-tryptophan-L-proline called brevianamide F. The reverse prenyltransferase notF then acts as a deoxybrevianamide E synthase and converts brevianamide F to deoxybrevianamide E via reverse prenylation at C-2 of the indole ring leading to the bicyclo[2.2.2]diazaoctane core. Deoxybrevianamide E is further hydroxylated at C-6 of the indole ring, likely catalyzed by the cytochrome P450 monooxygenase notG, to yield 6-hydroxy-deoxybrevianamide E. 6-hydroxy-deoxybrevianamide E is a specific substrate of the prenyltransferase notC for normal prenylation at C-7 to produce 6-hydroxy-7-prenyl-deoxybrevianamide, also called notoamide S. As the proposed pivotal branching point in notoamide biosynthesis, notoamide S can be diverted to notoamide E through an oxidative pyran ring closure putatively catalyzed by either notH cytochrome P450 monooxygenase or the notD FAD-linked oxidoreductase. This step would be followed by an indole 2,3-epoxidation-initiated pinacol-like rearrangement catalyzed by the notB FAD-dependent monooxygenase leading to the formation of notoamide C and notoamide D. On the other hand notoamide S is converted to notoamide T by notH (or notD), a bifunctional oxidase that also functions as the intramolecular Diels-Alderase responsible for generation of (+)-notoamide T. To generate antipodal (-)-notoaminide T, notH' (or notD') in Aspergillus versicolor is expected to catalyze a Diels-Alder reaction leading to the opposite stereochemistry. The remaining oxidoreductase notD (or notH) likely catalyzes the oxidative pyran ring formation to yield (+)-stephacidin A. The FAD-dependent monooxygenase notI is highly similar to notB and is predicted to catalyze a similar conversion from (+)-stephacidin A to (-)-notoamide B via the 2,3-epoxidation of (+)-stephacidin A followed by a pinacol-type rearrangement. Finally, it remains unclear which enzyme could be responsible for the final hydroxylation steps leading to notoamide A and sclerotiamide. The protein is Nonribisomal peptide synthetase notE of Aspergillus sp. (strain MF297-2).